The chain runs to 377 residues: uncharacterized protein (377 aa).

Residues 345–377 (VGPSPPAYEQVARSSPTDIPLPPPSCPTNVQRD) are disordered.

This is an uncharacterized protein from Schizosaccharomyces pombe (strain 972 / ATCC 24843) (Fission yeast).